Reading from the N-terminus, the 196-residue chain is Imidazole glycerol phosphate synthase subunit HisH (196 aa).

In terms of domain architecture, Glutamine amidotransferase type-1 spans 2-196; the sequence is NVVILDTGCA…AKLLKNFLEM (195 aa). Cysteine 77 acts as the Nucleophile in catalysis. Residues histidine 178 and glutamate 180 contribute to the active site.

Heterodimer of HisH and HisF.

The protein localises to the cytoplasm. It catalyses the reaction 5-[(5-phospho-1-deoxy-D-ribulos-1-ylimino)methylamino]-1-(5-phospho-beta-D-ribosyl)imidazole-4-carboxamide + L-glutamine = D-erythro-1-(imidazol-4-yl)glycerol 3-phosphate + 5-amino-1-(5-phospho-beta-D-ribosyl)imidazole-4-carboxamide + L-glutamate + H(+). It carries out the reaction L-glutamine + H2O = L-glutamate + NH4(+). It functions in the pathway amino-acid biosynthesis; L-histidine biosynthesis; L-histidine from 5-phospho-alpha-D-ribose 1-diphosphate: step 5/9. Its function is as follows. IGPS catalyzes the conversion of PRFAR and glutamine to IGP, AICAR and glutamate. The HisH subunit catalyzes the hydrolysis of glutamine to glutamate and ammonia as part of the synthesis of IGP and AICAR. The resulting ammonia molecule is channeled to the active site of HisF. This Shigella dysenteriae serotype 1 (strain Sd197) protein is Imidazole glycerol phosphate synthase subunit HisH.